The following is a 217-amino-acid chain: Octanoyltransferase (217 aa).

Positions 32 to 207 constitute a BPL/LPL catalytic domain; the sequence is SDSPDELWIV…TLSQLLGYQQ (176 aa). Residues 71–78, 138–140, and 151–153 each bind substrate; these read RGGQVTYH, SLG, and GLA. Cysteine 169 acts as the Acyl-thioester intermediate in catalysis.

This sequence belongs to the LipB family.

It is found in the cytoplasm. It catalyses the reaction octanoyl-[ACP] + L-lysyl-[protein] = N(6)-octanoyl-L-lysyl-[protein] + holo-[ACP] + H(+). It functions in the pathway protein modification; protein lipoylation via endogenous pathway; protein N(6)-(lipoyl)lysine from octanoyl-[acyl-carrier-protein]: step 1/2. Its function is as follows. Catalyzes the transfer of endogenously produced octanoic acid from octanoyl-acyl-carrier-protein onto the lipoyl domains of lipoate-dependent enzymes. Lipoyl-ACP can also act as a substrate although octanoyl-ACP is likely to be the physiological substrate. The protein is Octanoyltransferase of Shewanella sp. (strain ANA-3).